The chain runs to 108 residues: Nucleoid-associated protein BARBAKC583_1239 (108 aa).

Belongs to the YbaB/EbfC family. As to quaternary structure, homodimer.

Its subcellular location is the cytoplasm. The protein resides in the nucleoid. Binds to DNA and alters its conformation. May be involved in regulation of gene expression, nucleoid organization and DNA protection. This is Nucleoid-associated protein BARBAKC583_1239 from Bartonella bacilliformis (strain ATCC 35685 / KC583 / Herrer 020/F12,63).